Here is a 131-residue protein sequence, read N- to C-terminus: Large ribosomal subunit protein eL14 (131 aa).

The protein belongs to the eukaryotic ribosomal protein eL14 family. In terms of assembly, component of the large ribosomal subunit. Mature ribosomes consist of a small (40S) and a large (60S) subunit. The 40S subunit contains about 32 different proteins and 1 molecule of RNA (18S). The 60S subunit contains 45 different proteins and 3 molecules of RNA (25S, 5.8S and 5S).

It localises to the cytoplasm. Component of the ribosome, a large ribonucleoprotein complex responsible for the synthesis of proteins in the cell. The small ribosomal subunit (SSU) binds messenger RNAs (mRNAs) and translates the encoded message by selecting cognate aminoacyl-transfer RNA (tRNA) molecules. The large subunit (LSU) contains the ribosomal catalytic site termed the peptidyl transferase center (PTC), which catalyzes the formation of peptide bonds, thereby polymerizing the amino acids delivered by tRNAs into a polypeptide chain. The nascent polypeptides leave the ribosome through a tunnel in the LSU and interact with protein factors that function in enzymatic processing, targeting, and the membrane insertion of nascent chains at the exit of the ribosomal tunnel. This is Large ribosomal subunit protein eL14 from Candida albicans (strain SC5314 / ATCC MYA-2876) (Yeast).